A 65-amino-acid chain; its full sequence is Trypsin inhibitor (65 aa).

As to quaternary structure, homotrimer.

This chain is Trypsin inhibitor, found in Zea mays (Maize).